We begin with the raw amino-acid sequence, 680 residues long: DNA ligase (680 aa).

NAD(+)-binding positions include 44–48, 94–95, and Glu-124; these read DYIYD and SL. Lys-126 (N6-AMP-lysine intermediate) is an active-site residue. 4 residues coordinate NAD(+): Arg-147, Glu-181, Lys-297, and Lys-321. Cys-415, Cys-418, Cys-433, and Cys-438 together coordinate Zn(2+). A BRCT domain is found at 598 to 680; the sequence is DENSFFYGKK…VDEQVKEDGK (83 aa).

This sequence belongs to the NAD-dependent DNA ligase family. LigA subfamily. It depends on Mg(2+) as a cofactor. The cofactor is Mn(2+).

The enzyme catalyses NAD(+) + (deoxyribonucleotide)n-3'-hydroxyl + 5'-phospho-(deoxyribonucleotide)m = (deoxyribonucleotide)n+m + AMP + beta-nicotinamide D-nucleotide.. DNA ligase that catalyzes the formation of phosphodiester linkages between 5'-phosphoryl and 3'-hydroxyl groups in double-stranded DNA using NAD as a coenzyme and as the energy source for the reaction. It is essential for DNA replication and repair of damaged DNA. The polypeptide is DNA ligase (Leuconostoc mesenteroides subsp. mesenteroides (strain ATCC 8293 / DSM 20343 / BCRC 11652 / CCM 1803 / JCM 6124 / NCDO 523 / NBRC 100496 / NCIMB 8023 / NCTC 12954 / NRRL B-1118 / 37Y)).